Here is a 346-residue protein sequence, read N- to C-terminus: Annexin A1 (346 aa).

Position 2 is an N-acetylalanine (alanine 2). Residue serine 5 is modified to Phosphoserine; by TRPM7. Residue glutamine 19 forms an Isoglutamyl lysine isopeptide (Gln-Lys) (interchain with K-?) linkage. At tyrosine 21 the chain carries Phosphotyrosine. Residue serine 27 is modified to Phosphoserine; by PKC. Phosphoserine is present on residues serine 34 and serine 37. Annexin repeat units lie at residues 42-113 (FNVS…AMLK), 114-185 (TPAQ…ALAK), 197-269 (DLAD…TIVK), and 273-344 (STPA…ALCG). At lysine 58 the chain carries N6-acetyllysine. Ca(2+)-binding residues include glycine 59, valine 60, glutamate 62, arginine 97, leucine 100, glutamate 105, methionine 127, glycine 129, glycine 131, threonine 132, and glutamate 134. Threonine 136 is modified (phosphothreonine). Aspartate 171, glycine 210, and arginine 213 together coordinate Ca(2+). Residue lysine 214 forms a Glycyl lysine isopeptide (Lys-Gly) (interchain with G-Cter in SUMO1); alternate linkage. Lysine 214 is covalently cross-linked (Glycyl lysine isopeptide (Lys-Gly) (interchain with G-Cter in SUMO2); alternate). Ca(2+) is bound by residues glycine 215, aspartate 253, glutamate 255, and leucine 256. Lysine 257 participates in a covalent cross-link: Glycyl lysine isopeptide (Lys-Gly) (interchain with G-Cter in SUMO1). Ca(2+)-binding residues include glutamate 261, methionine 286, glycine 288, and glycine 290. Lysine 312 is modified (N6-acetyllysine). Cysteine 324 and cysteine 343 form a disulfide bridge. Residues leucine 328, glutamate 330, and threonine 331 each contribute to the Ca(2+) site. Lysine 332 is covalently cross-linked (Glycyl lysine isopeptide (Lys-Gly) (interchain with G-Cter in SUMO1)). Residue glutamate 336 coordinates Ca(2+).

Belongs to the annexin family. Homodimer; non-covalently linked. Homodimer; linked by transglutamylation. Homodimers linked by transglutamylation are observed in placenta, but not in other tissues. Interacts with S100A11. Heterotetramer, formed by two molecules each of S100A11 and ANXA1. Interacts with DYSF. Interacts with EGFR. In terms of processing, phosphorylated by protein kinase C, EGFR and TRPM7. Phosphorylated in response to EGF treatment. Sumoylated. Post-translationally, proteolytically cleaved by cathepsin CTSG to release the active N-terminal peptide Ac2-26. Detected in lung. Detected at the apical membrane of airway epithelial cells. Detected in intestinal epithelial cells. Detected in skeletal muscle. Detected in prostate. Detected in thymus (at protein level). Detected in stomach, lung, spleen, ovary and uterus, and at lower levels in kidney, thymus and heart.

Its subcellular location is the nucleus. It is found in the cytoplasm. It localises to the cell projection. The protein localises to the cilium. The protein resides in the basolateral cell membrane. Its subcellular location is the lateral cell membrane. It is found in the cell membrane. It localises to the apical cell membrane. The protein localises to the membrane. The protein resides in the early endosome. Its subcellular location is the cytoplasmic vesicle membrane. It is found in the endosome membrane. It localises to the secreted. The protein localises to the extracellular space. The protein resides in the extracellular exosome. Its subcellular location is the cytoplasmic vesicle. It is found in the secretory vesicle lumen. It localises to the phagocytic cup. Plays important roles in the innate immune response as effector of glucocorticoid-mediated responses and regulator of the inflammatory process. Has anti-inflammatory activity. Plays a role in glucocorticoid-mediated down-regulation of the early phase of the inflammatory response. Contributes to the adaptive immune response by enhancing signaling cascades that are triggered by T-cell activation, regulates differentiation and proliferation of activated T-cells. Promotes the differentiation of T-cells into Th1 cells and negatively regulates differentiation into Th2 cells. Has no effect on unstimulated T-cells. Negatively regulates hormone exocytosis via activation of the formyl peptide receptors and reorganization of the actin cytoskeleton. Has high affinity for Ca(2+) and can bind up to eight Ca(2+) ions. Displays Ca(2+)-dependent binding to phospholipid membranes. Plays a role in the formation of phagocytic cups and phagosomes. Plays a role in phagocytosis by mediating the Ca(2+)-dependent interaction between phagosomes and the actin cytoskeleton. Its function is as follows. Functions at least in part by activating the formyl peptide receptors and downstream signaling cascades. Promotes chemotaxis of granulocytes and monocytes via activation of the formyl peptide receptors. Promotes rearrangement of the actin cytoskeleton, cell polarization and cell migration. Promotes resolution of inflammation and wound healing. Acts via neutrophil N-formyl peptide receptors to enhance the release of CXCL2. This chain is Annexin A1 (Anxa1), found in Mus musculus (Mouse).